A 183-amino-acid chain; its full sequence is Helofensin-2 (183 aa).

A signal peptide spans 1 to 26 (MQMDWLFIAVISGIGLLSSGVPGTQG). A C(6)C(4)C(9)C(6)CC 1; approximate repeat occupies 27 to 64 (AYTTEQCRALNGSCNFYACFPKNVIIGKCDWWGWSCCA). The C(6)C(4)C(9)C(6)CC 2; approximate repeat unit spans residues 65 to 101 (RTPLERCTAKKGTCTKTGCTKTDTDHGPCDGGAQCCQ). The C(6)C(4)C(9)C(6)CC 3; approximate repeat unit spans residues 102–139 (RDPVKYCKFHGNVCGRGKCPMDHIPIGEQCMPGYPCCK). The C(6)C(4)C(9)C(6)CC 4; approximate repeat unit spans residues 140-177 (RDGPAYCKSKGGKCLRRCSQIVPTDIIGVCADGVPCCK).

Belongs to the beta-defensin family. Helofensin subfamily. Expressed by the mandibular venom gland.

The protein resides in the secreted. Functionally, lethal toxin which possesses an inhibitory effect on direct electrical stimulation of the isolated hemi-diaphragm of mice. Neither hemorrhagic nor hemolytic activities are detected. Phospholipase A2 activity, proteolytic activity and arginine esterolytic activity are absent. The chain is Helofensin-2 from Heloderma suspectum cinctum (Banded Gila monster).